The chain runs to 35 residues: Photosystem II reaction center protein M (35 aa).

A helical membrane pass occupies residues 5-25 (ILAFIATALFILVPTAFLLII).

The protein belongs to the PsbM family. In terms of assembly, PSII is composed of 1 copy each of membrane proteins PsbA, PsbB, PsbC, PsbD, PsbE, PsbF, PsbH, PsbI, PsbJ, PsbK, PsbL, PsbM, PsbT, PsbX, PsbY, PsbZ, Psb30/Ycf12, at least 3 peripheral proteins of the oxygen-evolving complex and a large number of cofactors. It forms dimeric complexes.

It is found in the plastid. It localises to the chloroplast thylakoid membrane. In terms of biological role, one of the components of the core complex of photosystem II (PSII). PSII is a light-driven water:plastoquinone oxidoreductase that uses light energy to abstract electrons from H(2)O, generating O(2) and a proton gradient subsequently used for ATP formation. It consists of a core antenna complex that captures photons, and an electron transfer chain that converts photonic excitation into a charge separation. This subunit is found at the monomer-monomer interface. This is Photosystem II reaction center protein M from Panax quinquefolius (American ginseng).